The chain runs to 582 residues: Formate--tetrahydrofolate ligase (582 aa).

An ATP-binding site is contributed by 65–72 (TPLGEGKT).

Belongs to the formate--tetrahydrofolate ligase family.

It catalyses the reaction (6S)-5,6,7,8-tetrahydrofolate + formate + ATP = (6R)-10-formyltetrahydrofolate + ADP + phosphate. It participates in one-carbon metabolism; tetrahydrofolate interconversion. The protein is Formate--tetrahydrofolate ligase of Vibrio parahaemolyticus serotype O3:K6 (strain RIMD 2210633).